A 294-amino-acid chain; its full sequence is Elongation factor Ts (294 aa).

Positions 81-84 (TDFV) are involved in Mg(2+) ion dislocation from EF-Tu.

It belongs to the EF-Ts family.

It is found in the cytoplasm. Its function is as follows. Associates with the EF-Tu.GDP complex and induces the exchange of GDP to GTP. It remains bound to the aminoacyl-tRNA.EF-Tu.GTP complex up to the GTP hydrolysis stage on the ribosome. This is Elongation factor Ts from Hydrogenovibrio crunogenus (strain DSM 25203 / XCL-2) (Thiomicrospira crunogena).